Reading from the N-terminus, the 175-residue chain is ATP-dependent protease subunit HslV (175 aa).

Residue Thr2 is part of the active site. The Na(+) site is built by Gly158, Cys161, and Thr164.

This sequence belongs to the peptidase T1B family. HslV subfamily. As to quaternary structure, a double ring-shaped homohexamer of HslV is capped on each side by a ring-shaped HslU homohexamer. The assembly of the HslU/HslV complex is dependent on binding of ATP.

The protein resides in the cytoplasm. The enzyme catalyses ATP-dependent cleavage of peptide bonds with broad specificity.. With respect to regulation, allosterically activated by HslU binding. Its function is as follows. Protease subunit of a proteasome-like degradation complex believed to be a general protein degrading machinery. This Haemophilus influenzae (strain 86-028NP) protein is ATP-dependent protease subunit HslV.